The sequence spans 223 residues: MPEGPQALQSPPATIFLLLISAAGLGPGCQALWVEWGPPSVTVSVGEEVRLQCTHNGSNTNVTWWHVLQSNSSWPPVMYRGDVGAGGELIIKPVNKTHRGMYRCQVSDGKKIQRSCGTYLRVRDPLPRPFLDMGEGTKNNIITAEGIILLICAVVPGTLLLFRKRWQNMKFGADIQDDYEDENLYEGLNLDDCSMYEDISRGLQGTYQDVGSLHIGDAQLEKP.

An N-terminal signal peptide occupies residues 1–31 (MPEGPQALQSPPATIFLLLISAAGLGPGCQA). Residues 32-120 (LWVEWGPPSV…KIQRSCGTYL (89 aa)) form the Ig-like C2-type domain. Topologically, residues 32 to 140 (LWVEWGPPSV…LDMGEGTKNN (109 aa)) are extracellular. A disulfide bridge connects residues Cys53 and Cys104. 4 N-linked (GlcNAc...) asparagine glycosylation sites follow: Asn56, Asn61, Asn71, and Asn95. A helical membrane pass occupies residues 141 to 161 (IITAEGIILLICAVVPGTLLL). Residues 162–223 (FRKRWQNMKF…HIGDAQLEKP (62 aa)) are Cytoplasmic-facing. In terms of domain architecture, ITAM spans 174 to 202 (DIQDDYEDENLYEGLNLDDCSMYEDISRG). Tyr185 is modified (phosphotyrosine; by SRC-type Tyr-kinases). Tyr196 is subject to Phosphotyrosine. An Asymmetric dimethylarginine; by PRMT1 modification is found at Arg201. Phosphotyrosine; by Tyr-kinases is present on Tyr207.

In terms of assembly, heterodimer of alpha and beta chains; disulfide-linked. Part of the B-cell antigen receptor complex where the alpha/beta chain heterodimer is non-covalently associated with an antigen-specific membrane-bound surface immunoglobulin of two heavy chains and two light chains. Interacts through its phosphorylated ITAM domain with the SH2 domains of SYK which stimulates SYK autophosphorylation and activation. Also interacts, when phosphorylated on Tyr-207, with the SH2 domain of BLNK/SLP65, bringing BLNK into proximity with SYK and allowing SYK to phosphorylate BLNK which is necessary for trafficking of the BCR to late endosomes. Interacts with Src-family tyrosine kinases including FYN and LYN, increasing their activity. In terms of processing, phosphorylated on tyrosine, serine and threonine residues upon B-cell activation. Phosphorylation of tyrosine residues by Src-family kinases, including LYN, is an early and essential feature of the BCR signaling cascade. The phosphorylated tyrosines serve as docking sites for SH2-domain containing kinases, leading to their activation which in turn leads to phosphorylation of downstream targets. Phosphorylation of serine and threonine residues may prevent subsequent tyrosine phosphorylation. Post-translationally, arginine methylation in the ITAM domain may interfere with the binding of SYK. It promotes signals leading to B-cell differentiation. As to expression, B-cells.

Its subcellular location is the cell membrane. In terms of biological role, required in cooperation with CD79B for initiation of the signal transduction cascade activated by binding of antigen to the B-cell antigen receptor complex (BCR) which leads to internalization of the complex, trafficking to late endosomes and antigen presentation. Also required for BCR surface expression and for efficient differentiation of pro- and pre-B-cells. Stimulates SYK autophosphorylation and activation. Binds to BLNK, bringing BLNK into proximity with SYK and allowing SYK to phosphorylate BLNK. Also interacts with and increases activity of some Src-family tyrosine kinases. Represses BCR signaling during development of immature B-cells. This Bos taurus (Bovine) protein is B-cell antigen receptor complex-associated protein alpha chain (CD79A).